We begin with the raw amino-acid sequence, 274 residues long: Dermonecrotic toxin LarSicTox-alphaIV1 (274 aa).

Residue His5 is part of the active site. 2 residues coordinate Mg(2+): Glu25 and Asp27. Residue His41 is the Nucleophile of the active site. 2 disulfides stabilise this stretch: Cys45/Cys51 and Cys47/Cys192. Asp85 serves as a coordination point for Mg(2+).

This sequence belongs to the arthropod phospholipase D family. Class II subfamily. Mg(2+) is required as a cofactor. In terms of tissue distribution, expressed by the venom gland.

The protein localises to the secreted. The enzyme catalyses an N-(acyl)-sphingosylphosphocholine = an N-(acyl)-sphingosyl-1,3-cyclic phosphate + choline. It carries out the reaction an N-(acyl)-sphingosylphosphoethanolamine = an N-(acyl)-sphingosyl-1,3-cyclic phosphate + ethanolamine. The catalysed reaction is a 1-acyl-sn-glycero-3-phosphocholine = a 1-acyl-sn-glycero-2,3-cyclic phosphate + choline. It catalyses the reaction a 1-acyl-sn-glycero-3-phosphoethanolamine = a 1-acyl-sn-glycero-2,3-cyclic phosphate + ethanolamine. Functionally, dermonecrotic toxins cleave the phosphodiester linkage between the phosphate and headgroup of certain phospholipids (sphingolipid and lysolipid substrates), forming an alcohol (often choline) and a cyclic phosphate. This toxin acts on sphingomyelin (SM). It may also act on ceramide phosphoethanolamine (CPE), lysophosphatidylcholine (LPC) and lysophosphatidylethanolamine (LPE), but not on lysophosphatidylserine (LPS), and lysophosphatidylglycerol (LPG). It acts by transphosphatidylation, releasing exclusively cyclic phosphate products as second products. Induces dermonecrosis, hemolysis, increased vascular permeability, edema, inflammatory response, and platelet aggregation. This is Dermonecrotic toxin LarSicTox-alphaIV1 from Loxosceles arizonica (Arizona brown spider).